The sequence spans 518 residues: Prosaposin (518 aa).

An N-terminal signal peptide occupies residues 1-17; that stretch reads MARRLLTLLGLLAAAVA. A propeptide spanning residues 18 to 60 is cleaved from the precursor; the sequence is SPVLWQKDCAKGPEVWCQSLRTASQCGAVKHCQQNVWSKPAVN. In terms of domain architecture, Saposin A-type 1 spans 19–59; it reads PVLWQKDCAKGPEVWCQSLRTASQCGAVKHCQQNVWSKPAV. 4 Saposin B-type domains span residues 60-143, 193-277, 307-388, and 399-480; these read NSIP…QSLQ, TEDV…PSVK, TFSV…AANK, and AGGF…GAAK. Intrachain disulfides connect Cys-64-Cys-139, Cys-67-Cys-133, and Cys-95-Cys-107. The N-linked (GlcNAc...) asparagine glycan is linked to Asn-81. Positions 144–193 are excised as a propeptide; that stretch reads KHLAAMKLQKQLQSNKIPELDFSELTSPFMANVPLLLYPQDKPKQKSKAT. Disulfide bonds link Cys-197–Cys-273, Cys-200–Cys-267, and Cys-229–Cys-240. A glycan (N-linked (GlcNAc...) asparagine) is linked at Asn-214. Residues 277–306 constitute a propeptide that is removed on maturation; the sequence is KSVPLQTLVPAQVVHEVKMETVEKATVQEK. 3 cysteine pairs are disulfide-bonded: Cys-311/Cys-384, Cys-314/Cys-378, and Cys-342/Cys-353. Asn-328 carries an N-linked (GlcNAc...) asparagine glycan. A propeptide spanning residues 388-398 is cleaved from the precursor; it reads KPPQQPVVVKP. Intrachain disulfides connect Cys-403–Cys-476, Cys-406–Cys-470, and Cys-434–Cys-445. N-linked (GlcNAc...) asparagine glycosylation is present at Asn-420. Residues 480–518 constitute a propeptide that is removed on maturation; that stretch reads KKPLLGEDACVWGPGYWCKNMETAAQCNAVDHCRRHVWN. Residues 482–518 form the Saposin A-type 2 domain; that stretch reads PLLGEDACVWGPGYWCKNMETAAQCNAVDHCRRHVWN.

Saposin-B is a homodimer. In terms of processing, this precursor is proteolytically processed to 4 small peptides, which are similar to each other and are sphingolipid hydrolase activator proteins.

Its subcellular location is the lysosome. It localises to the secreted. The lysosomal degradation of sphingolipids takes place by the sequential action of specific hydrolases. Some of these enzymes require specific low-molecular mass, non-enzymatic proteins: the sphingolipids activator proteins (coproteins). Functionally, saposin-A and saposin-C stimulate the hydrolysis of glucosylceramide by beta-glucosylceramidase (EC 3.2.1.45) and galactosylceramide by beta-galactosylceramidase (EC 3.2.1.46). Saposin-C apparently acts by combining with the enzyme and acidic lipid to form an activated complex, rather than by solubilizing the substrate. Its function is as follows. Saposin-B stimulates the hydrolysis of galacto-cerebroside sulfate by arylsulfatase A (EC 3.1.6.8), GM1 gangliosides by beta-galactosidase (EC 3.2.1.23) and globotriaosylceramide by alpha-galactosidase A (EC 3.2.1.22). Saposin-B forms a solubilizing complex with the substrates of the sphingolipid hydrolases. In terms of biological role, saposin-D is a specific sphingomyelin phosphodiesterase activator (EC 3.1.4.12). This chain is Prosaposin (PSAP), found in Gallus gallus (Chicken).